The chain runs to 189 residues: Threonylcarbamoyl-AMP synthase (189 aa).

Positions 6–189 constitute a YrdC-like domain; the sequence is SPAFESVLTA…ALTGELYRQG (184 aa).

It belongs to the SUA5 family. TsaC subfamily.

It localises to the cytoplasm. It catalyses the reaction L-threonine + hydrogencarbonate + ATP = L-threonylcarbamoyladenylate + diphosphate + H2O. Functionally, required for the formation of a threonylcarbamoyl group on adenosine at position 37 (t(6)A37) in tRNAs that read codons beginning with adenine. Catalyzes the conversion of L-threonine, HCO(3)(-)/CO(2) and ATP to give threonylcarbamoyl-AMP (TC-AMP) as the acyladenylate intermediate, with the release of diphosphate. This chain is Threonylcarbamoyl-AMP synthase, found in Photorhabdus laumondii subsp. laumondii (strain DSM 15139 / CIP 105565 / TT01) (Photorhabdus luminescens subsp. laumondii).